The sequence spans 326 residues: Aspartate carbamoyltransferase catalytic subunit (326 aa).

Residues arginine 55 and threonine 56 each contribute to the carbamoyl phosphate site. Lysine 83 is an L-aspartate binding site. 3 residues coordinate carbamoyl phosphate: arginine 105, histidine 135, and glutamine 138. Arginine 176 and arginine 230 together coordinate L-aspartate. Residues glycine 271 and proline 272 each contribute to the carbamoyl phosphate site.

This sequence belongs to the aspartate/ornithine carbamoyltransferase superfamily. ATCase family. In terms of assembly, heterododecamer (2C3:3R2) of six catalytic PyrB chains organized as two trimers (C3), and six regulatory PyrI chains organized as three dimers (R2).

It catalyses the reaction carbamoyl phosphate + L-aspartate = N-carbamoyl-L-aspartate + phosphate + H(+). The protein operates within pyrimidine metabolism; UMP biosynthesis via de novo pathway; (S)-dihydroorotate from bicarbonate: step 2/3. Functionally, catalyzes the condensation of carbamoyl phosphate and aspartate to form carbamoyl aspartate and inorganic phosphate, the committed step in the de novo pyrimidine nucleotide biosynthesis pathway. The protein is Aspartate carbamoyltransferase catalytic subunit of Streptomyces coelicolor (strain ATCC BAA-471 / A3(2) / M145).